Consider the following 209-residue polypeptide: uncharacterized protein (209 aa).

Transmembrane regions (helical) follow at residues 21–41, 81–101, 107–127, and 159–179; these read LAYL…VFGL, ILGL…RIAA, VLVN…LYVF, and AAGA…LLFF.

It localises to the cell membrane. This is an uncharacterized protein from Bacillus subtilis (strain 168).